The chain runs to 75 residues: Bacteriocin lactococcin-A (75 aa).

Positions 1–21 (MKNQLNFNIVSDEELSEANGG) are excised as a propeptide. A helical transmembrane segment spans residues 30–52 (AAGDLYYNTNTHKYVYQQTQNAF).

The protein resides in the secreted. It localises to the host cell membrane. In terms of biological role, kills Lactococci. The polypeptide is Bacteriocin lactococcin-A (lcnA) (Lactococcus lactis subsp. cremoris (Streptococcus cremoris)).